A 548-amino-acid chain; its full sequence is Chaperonin GroEL 2 (548 aa).

Residues 29–32 (TLGP), 86–90 (DGTTT), Gly418, 482–484 (NAA), and Asp498 contribute to the ATP site.

This sequence belongs to the chaperonin (HSP60) family. Forms a cylinder of 14 subunits composed of two heptameric rings stacked back-to-back. Interacts with the co-chaperonin GroES.

Its subcellular location is the cytoplasm. The catalysed reaction is ATP + H2O + a folded polypeptide = ADP + phosphate + an unfolded polypeptide.. Functionally, together with its co-chaperonin GroES, plays an essential role in assisting protein folding. The GroEL-GroES system forms a nano-cage that allows encapsulation of the non-native substrate proteins and provides a physical environment optimized to promote and accelerate protein folding. This is Chaperonin GroEL 2 from Corynebacterium glutamicum (strain ATCC 13032 / DSM 20300 / JCM 1318 / BCRC 11384 / CCUG 27702 / LMG 3730 / NBRC 12168 / NCIMB 10025 / NRRL B-2784 / 534).